Consider the following 401-residue polypeptide: Dual specificity mitogen-activated protein kinase kinase 2 (401 aa).

Methionine 1 carries the post-translational modification N-acetylmethionine. At serine 23 the chain carries Phosphoserine. Residues 72–370 (FERISELGAG…LKLLMNHAFI (299 aa)) enclose the Protein kinase domain. ATP contacts are provided by residues 78–86 (LGAGNGGVV) and lysine 101. Aspartate 194 acts as the Proton acceptor in catalysis. Residues serine 222 and serine 226 each carry the phosphoserine; by RAF modification. Positions 282–310 (PVVDGADGEPHSVSPRPRPPGRPISVGHG) are disordered. Phosphoserine occurs at positions 293, 295, and 306. Residues threonine 395 and threonine 397 each carry the phosphothreonine modification.

The protein belongs to the protein kinase superfamily. STE Ser/Thr protein kinase family. MAP kinase kinase subfamily. In terms of assembly, interacts with MORG1. Interacts with SGK1. Interacts with KSR1. Interacts with KSR1 and BRAF; the interaction with KSR1 mediates KSR1-BRAF dimerization. Interacts with GLS. Mg(2+) serves as cofactor. Post-translationally, phosphorylation on Ser/Thr by MAP kinase kinase kinases (RAF or MEKK1) positively regulates the kinase activity. Phosphorylated by MAP2K1/MEK1. Low levels of autophosphorylation have been observed. As to expression, expressed in adult intestine, kidney, liver, lung, pancreas, spleen, thymus, and at high levels in the neonatal brain. Lower expression is found in adult brain and heart.

The protein resides in the cytoplasm. It localises to the membrane. The enzyme catalyses L-seryl-[protein] + ATP = O-phospho-L-seryl-[protein] + ADP + H(+). It catalyses the reaction L-threonyl-[protein] + ATP = O-phospho-L-threonyl-[protein] + ADP + H(+). It carries out the reaction L-tyrosyl-[protein] + ATP = O-phospho-L-tyrosyl-[protein] + ADP + H(+). Its activity is regulated as follows. Inhibited by serine/threonine phosphatase 2A. Functionally, catalyzes the concomitant phosphorylation of a threonine and a tyrosine residue in a Thr-Glu-Tyr sequence located in MAP kinases. Activates the ERK1 and ERK2 MAP kinases. Activates BRAF in a KSR1 or KSR2-dependent manner; by binding to KSR1 or KSR2 releases the inhibitory intramolecular interaction between KSR1 or KSR2 protein kinase and N-terminal domains which promotes KSR1 or KSR2-BRAF dimerization and BRAF activation. This chain is Dual specificity mitogen-activated protein kinase kinase 2 (Map2k2), found in Mus musculus (Mouse).